A 305-amino-acid polypeptide reads, in one-letter code: RNA-binding protein rnp-1 (305 aa).

One can recognise an RRM domain in the interval 3-72 (SKLFVGNLPD…KVVNIKKSTS (70 aa)). The segment at 84–97 (CFRCQSDEHRTPQC) adopts a CCHC-type zinc-finger fold. Residues 284 to 305 (QQIQHQQATGSPAPVPAPPRLY) form a disordered region. Positions 296 to 305 (APVPAPPRLY) are enriched in pro residues.

Expressed throughout the germline.

Its function is as follows. RNA-binding protein that is required for the germ line to transition from spermatogenesis to oogenesis and allow for normal oocyte development. In Caenorhabditis elegans, this protein is RNA-binding protein rnp-1.